The sequence spans 172 residues: Bacilliredoxin SRU_0242 (172 aa).

The segment at 141-172 (TDEAPPSDAPSRPDLSSSPNAGGLPSTFQSIS) is disordered. The span at 154-172 (DLSSSPNAGGLPSTFQSIS) shows a compositional bias: polar residues.

This sequence belongs to the bacilliredoxin family.

The polypeptide is Bacilliredoxin SRU_0242 (Salinibacter ruber (strain DSM 13855 / M31)).